We begin with the raw amino-acid sequence, 227 residues long: LexA repressor (227 aa).

Positions 25 to 45 (FDEMKDALDLRSKSGIHRLIT) form a DNA-binding region, H-T-H motif. Residues Ser148 and Lys186 each act as for autocatalytic cleavage activity in the active site.

The protein belongs to the peptidase S24 family. Homodimer.

It catalyses the reaction Hydrolysis of Ala-|-Gly bond in repressor LexA.. In terms of biological role, represses a number of genes involved in the response to DNA damage (SOS response), including recA and lexA. In the presence of single-stranded DNA, RecA interacts with LexA causing an autocatalytic cleavage which disrupts the DNA-binding part of LexA, leading to derepression of the SOS regulon and eventually DNA repair. The protein is LexA repressor of Cereibacter sphaeroides (strain ATCC 17029 / ATH 2.4.9) (Rhodobacter sphaeroides).